An 861-amino-acid polypeptide reads, in one-letter code: DNA mismatch repair protein MutS (861 aa).

Residue 614 to 621 (GPNMGGKS) coordinates ATP.

Belongs to the DNA mismatch repair MutS family.

Its function is as follows. This protein is involved in the repair of mismatches in DNA. It is possible that it carries out the mismatch recognition step. This protein has a weak ATPase activity. The protein is DNA mismatch repair protein MutS of Mannheimia succiniciproducens (strain KCTC 0769BP / MBEL55E).